A 437-amino-acid chain; its full sequence is Trigger factor (437 aa).

The PPIase FKBP-type domain maps to 174-260 (GDFVQISFEG…VKSLKKKIFP (87 aa)).

Belongs to the FKBP-type PPIase family. Tig subfamily.

Its subcellular location is the cytoplasm. The enzyme catalyses [protein]-peptidylproline (omega=180) = [protein]-peptidylproline (omega=0). Involved in protein export. Acts as a chaperone by maintaining the newly synthesized protein in an open conformation. Functions as a peptidyl-prolyl cis-trans isomerase. The sequence is that of Trigger factor from Koribacter versatilis (strain Ellin345).